A 301-amino-acid chain; its full sequence is Homoserine O-acetyltransferase (301 aa).

Cys-142 (acyl-thioester intermediate) is an active-site residue. Residues Lys-163 and Ser-192 each contribute to the substrate site. His-235 acts as the Proton acceptor in catalysis. Residue Glu-237 is part of the active site. Arg-249 contributes to the substrate binding site.

Belongs to the MetA family.

The protein localises to the cytoplasm. The catalysed reaction is L-homoserine + acetyl-CoA = O-acetyl-L-homoserine + CoA. Its pathway is amino-acid biosynthesis; L-methionine biosynthesis via de novo pathway; O-acetyl-L-homoserine from L-homoserine: step 1/1. In terms of biological role, transfers an acetyl group from acetyl-CoA to L-homoserine, forming acetyl-L-homoserine. This is Homoserine O-acetyltransferase from Bacillus cereus (strain ZK / E33L).